A 548-amino-acid polypeptide reads, in one-letter code: Thermosome subunit beta (548 aa).

The protein belongs to the TCP-1 chaperonin family. As to quaternary structure, forms a Heterooligomeric complex of two stacked eight-membered rings.

Molecular chaperone; binds unfolded polypeptides in vitro, and has a weak ATPase activity. This is Thermosome subunit beta (thsB) from Aeropyrum pernix (strain ATCC 700893 / DSM 11879 / JCM 9820 / NBRC 100138 / K1).